Here is a 285-residue protein sequence, read N- to C-terminus: Polyamine aminopropyltransferase (285 aa).

A PABS domain is found at 5 to 241; it reads DNWYIEHFQP…GWWSVTMASK (237 aa). Gln-35 is an S-methyl-5'-thioadenosine binding site. Residues His-66 and Asp-90 each contribute to the spermidine site. Residues Asp-110 and 141 to 142 each bind S-methyl-5'-thioadenosine; that span reads DG. Asp-160 (proton acceptor) is an active-site residue. 160-163 is a spermidine binding site; sequence DSTD. Position 167 (Pro-167) interacts with S-methyl-5'-thioadenosine.

The protein belongs to the spermidine/spermine synthase family. In terms of assembly, homodimer or homotetramer.

It is found in the cytoplasm. It catalyses the reaction S-adenosyl 3-(methylsulfanyl)propylamine + putrescine = S-methyl-5'-thioadenosine + spermidine + H(+). Its pathway is amine and polyamine biosynthesis; spermidine biosynthesis; spermidine from putrescine: step 1/1. In terms of biological role, catalyzes the irreversible transfer of a propylamine group from the amino donor S-adenosylmethioninamine (decarboxy-AdoMet) to putrescine (1,4-diaminobutane) to yield spermidine. This chain is Polyamine aminopropyltransferase, found in Xanthomonas campestris pv. campestris (strain 8004).